The primary structure comprises 301 residues: MADQLIRATAAEGGIRAVGVITTRLTEEARQRHKLSYVATAALGRTMAAGLLMASSMKRSGSRVNVRVKGDGPLGGILVDAGLDGTVRGYVGNPSIELPPNAKGKLDVGGAVGGGYLYVVRDVGYGYPYSSTVELVSGEIGDDVAHYLVNSEQTPSALVLGVFVGAGGVTAAGGLLIQVLPKAARDEALVETLESRVAGLAGFTPLLQAGKNLTEIFSDLLGDMGLEIFSERQMLRFHCGCSFDRVLGALKILGEAELQDMIVKDNGAEATCDFCSNVYQASSDQLAQLIADLQAESTVSG.

2 disulfide bridges follow: Cys-239–Cys-241 and Cys-272–Cys-275.

The protein belongs to the HSP33 family. Post-translationally, under oxidizing conditions two disulfide bonds are formed involving the reactive cysteines. Under reducing conditions zinc is bound to the reactive cysteines and the protein is inactive.

The protein localises to the cytoplasm. Functionally, redox regulated molecular chaperone. Protects both thermally unfolding and oxidatively damaged proteins from irreversible aggregation. Plays an important role in the bacterial defense system toward oxidative stress. This chain is 33 kDa chaperonin, found in Nostoc punctiforme (strain ATCC 29133 / PCC 73102).